The chain runs to 254 residues: Probable 2,4-dienoyl-CoA reductase [(2E)-enoyl-CoA-producing] (254 aa).

Residue 6 to 38 (VIITGGSSGMGKAMAKKQAELGWHVMVTGRNHE) coordinates NADP(+). Thr100 provides a ligand contact to substrate. The Proton acceptor role is filled by Tyr142. Lys157 contributes to the NAD(+) binding site.

It belongs to the short-chain dehydrogenases/reductases (SDR) family. 2,4-dienoyl-CoA reductase subfamily.

It carries out the reaction a 4,5-saturated-(2E)-enoyl-CoA + NADP(+) = a (2E,4E)-dienoyl-CoA + NADPH + H(+). The catalysed reaction is a (2E,4Z)-dienoyl-CoA + NADPH + H(+) = a 4,5-saturated-(2E)-enoyl-CoA + NADP(+). It functions in the pathway lipid metabolism; fatty acid beta-oxidation. Auxiliary enzyme of beta-oxidation. It participates in the metabolism of unsaturated fatty enoyl-CoA esters having double bonds in both even- and odd-numbered positions. Catalyzes the NADP-dependent reduction of 2,4-dienoyl-CoA to yield trans-3-enoyl-CoA. The polypeptide is Probable 2,4-dienoyl-CoA reductase [(2E)-enoyl-CoA-producing] (fadH) (Bacillus subtilis (strain 168)).